Here is a 54-residue protein sequence, read N- to C-terminus: Large ribosomal subunit protein bL33 (54 aa).

It belongs to the bacterial ribosomal protein bL33 family.

The chain is Large ribosomal subunit protein bL33 from Corynebacterium diphtheriae (strain ATCC 700971 / NCTC 13129 / Biotype gravis).